We begin with the raw amino-acid sequence, 365 residues long: tRNA-specific 2-thiouridylase MnmA (365 aa).

ATP contacts are provided by residues 9 to 16 (AMSGGVDS) and Met-35. The Nucleophile role is filled by Cys-105. Cys-105 and Cys-203 form a disulfide bridge. ATP is bound at residue Gly-129. An interaction with tRNA region spans residues 153 to 155 (KDQ). Catalysis depends on Cys-203, which acts as the Cysteine persulfide intermediate. An interaction with tRNA region spans residues 308–309 (RY).

It belongs to the MnmA/TRMU family.

It localises to the cytoplasm. It carries out the reaction S-sulfanyl-L-cysteinyl-[protein] + uridine(34) in tRNA + AH2 + ATP = 2-thiouridine(34) in tRNA + L-cysteinyl-[protein] + A + AMP + diphosphate + H(+). In terms of biological role, catalyzes the 2-thiolation of uridine at the wobble position (U34) of tRNA, leading to the formation of s(2)U34. In Pelotomaculum thermopropionicum (strain DSM 13744 / JCM 10971 / SI), this protein is tRNA-specific 2-thiouridylase MnmA.